Consider the following 98-residue polypeptide: Cell division topological specificity factor (98 aa).

It belongs to the MinE family.

Prevents the cell division inhibition by proteins MinC and MinD at internal division sites while permitting inhibition at polar sites. This ensures cell division at the proper site by restricting the formation of a division septum at the midpoint of the long axis of the cell. This chain is Cell division topological specificity factor, found in Nitrosomonas europaea (strain ATCC 19718 / CIP 103999 / KCTC 2705 / NBRC 14298).